Here is a 340-residue protein sequence, read N- to C-terminus: Heat-inducible transcription repressor HrcA (340 aa).

This sequence belongs to the HrcA family.

Its function is as follows. Negative regulator of class I heat shock genes (grpE-dnaK-dnaJ and groELS operons). Prevents heat-shock induction of these operons. This chain is Heat-inducible transcription repressor HrcA, found in Burkholderia cenocepacia (strain ATCC BAA-245 / DSM 16553 / LMG 16656 / NCTC 13227 / J2315 / CF5610) (Burkholderia cepacia (strain J2315)).